The sequence spans 162 residues: Large ribosomal subunit protein uL10 (162 aa).

It belongs to the universal ribosomal protein uL10 family. Part of the ribosomal stalk of the 50S ribosomal subunit. The N-terminus interacts with L11 and the large rRNA to form the base of the stalk. The C-terminus forms an elongated spine to which L12 dimers bind in a sequential fashion forming a multimeric L10(L12)X complex.

Its function is as follows. Forms part of the ribosomal stalk, playing a central role in the interaction of the ribosome with GTP-bound translation factors. This chain is Large ribosomal subunit protein uL10, found in Borrelia duttonii (strain Ly).